We begin with the raw amino-acid sequence, 330 residues long: MATKWGICSAGKISNDFVVALSTLPAVDHQVVAIAARDLEKAKNFAQNHNIPKAYGSYEELAKDPDIDVIYVGAIHPVHRDVVLMCLQNGKNILCEKPLAMNAAQVQELIATARKFNVFLMEAFWSRFFPVYEEIRALLSQKAIGDVKFIRAEFGVEIYKVPRAVEKELGGGALLDIGCYCVQFVTMVFNGERPESVTAKGFLHETGVDESMSLILQYSGKRQAVLSSTIMATLPNQAAICGTKGIIQIPSDMWSPTSIIVNGKERKFDIPHTTKPMNFSNGTGMSYEAEHVRQCLLKGLKESPIMSLADSEMVASIMDEALQQLGVTYP.

It belongs to the Gfo/Idh/MocA family. As to quaternary structure, homodimer.

It catalyses the reaction (1R,2R)-1,2-dihydrobenzene-1,2-diol + NADP(+) = catechol + NADPH + H(+). It carries out the reaction D-xylose + NADP(+) = D-xylono-1,5-lactone + NADPH + H(+). This is Trans-1,2-dihydrobenzene-1,2-diol dehydrogenase (dhdh) from Xenopus tropicalis (Western clawed frog).